Consider the following 264-residue polypeptide: 5'-nucleotidase SurE (264 aa).

The a divalent metal cation site is built by aspartate 12, aspartate 13, serine 43, and asparagine 98.

This sequence belongs to the SurE nucleotidase family. A divalent metal cation is required as a cofactor.

Its subcellular location is the cytoplasm. The enzyme catalyses a ribonucleoside 5'-phosphate + H2O = a ribonucleoside + phosphate. Functionally, nucleotidase that shows phosphatase activity on nucleoside 5'-monophosphates. This is 5'-nucleotidase SurE from Sulfurovum sp. (strain NBC37-1).